The sequence spans 370 residues: Cysteine-type anaerobic sulfatase-maturating enzyme (370 aa).

The region spanning 1-227 (MPPLSLLIKP…LKNLFDFWYE (227 aa)) is the Radical SAM core domain. The [4Fe-4S] cluster site is built by Cys15 and Cys19. An S-adenosyl-L-methionine-binding site is contributed by Tyr21. Cys22 serves as a coordination point for [4Fe-4S] cluster. S-adenosyl-L-methionine contacts are provided by Gly66, Ser122, Arg134, and Leu195. Residues Cys255, Cys261, and Cys276 each contribute to the [4Fe-4S] cluster site. Catalysis depends on Asp277, which acts as the Proton acceptor. [4Fe-4S] cluster is bound by residues Cys317, Cys320, Cys326, Cys330, and Cys348.

It belongs to the radical SAM superfamily. Anaerobic sulfatase-maturating enzyme family. In terms of assembly, monomer. [4Fe-4S] cluster serves as cofactor.

The enzyme catalyses L-cysteinyl-[sulfatase] + S-adenosyl-L-methionine + H2O = 3-oxo-L-alanyl-[sulfatase] + hydrogen sulfide + 5'-deoxyadenosine + L-methionine + 2 H(+). The protein operates within protein modification; sulfatase oxidation. Functionally, involved in 'Cys-type' sulfatase maturation under anaerobic conditions. Catalyzes the post-translational modification of cysteine ('Cys-51' in the arylsulfatase CPF_0221) into 3-oxoalanine (also known as C(alpha)-formylglycine (FGly)), by a free radical chemical mechanism initiated via the reductive cleavage of S-adenosyl-L-methionine (SAM). Is also able to oxidize a serine residue in a synthetic substrate to FGly in vitro, and in a serine variant of a Cys-type sulfatase in vivo, but this activity is not physiological. Converts threonyl peptides to the corresponding ketone product, and also allo-threonyl peptides, but with a significantly reduced efficiency. The polypeptide is Cysteine-type anaerobic sulfatase-maturating enzyme (Clostridium perfringens (strain ATCC 13124 / DSM 756 / JCM 1290 / NCIMB 6125 / NCTC 8237 / Type A)).